Reading from the N-terminus, the 337-residue chain is Anthranilate phosphoribosyltransferase (337 aa).

5-phospho-alpha-D-ribose 1-diphosphate-binding positions include G81, G84–D85, S89, N91–T94, K109–S117, and A121. G81 is an anthranilate binding site. A Mg(2+)-binding site is contributed by S93. N112 serves as a coordination point for anthranilate. Residue R167 coordinates anthranilate. Residues D226 and E227 each coordinate Mg(2+).

Belongs to the anthranilate phosphoribosyltransferase family. In terms of assembly, homodimer. The cofactor is Mg(2+).

The enzyme catalyses N-(5-phospho-beta-D-ribosyl)anthranilate + diphosphate = 5-phospho-alpha-D-ribose 1-diphosphate + anthranilate. The protein operates within amino-acid biosynthesis; L-tryptophan biosynthesis; L-tryptophan from chorismate: step 2/5. Its function is as follows. Catalyzes the transfer of the phosphoribosyl group of 5-phosphorylribose-1-pyrophosphate (PRPP) to anthranilate to yield N-(5'-phosphoribosyl)-anthranilate (PRA). The sequence is that of Anthranilate phosphoribosyltransferase from Afipia carboxidovorans (strain ATCC 49405 / DSM 1227 / KCTC 32145 / OM5) (Oligotropha carboxidovorans).